The following is a 208-amino-acid chain: Small ribosomal subunit protein eS8 (208 aa).

Positions 1 to 40 (MGISRDNWHKRRKTGGKRKPVHKKRKYELGRPPSNTKLGP) are disordered. Positions 8 to 26 (WHKRRKTGGKRKPVHKKRK) are enriched in basic residues.

The protein belongs to the eukaryotic ribosomal protein eS8 family. Component of the small ribosomal subunit.

Its subcellular location is the cytoplasm. Component of the small ribosomal subunit. The ribosome is a large ribonucleoprotein complex responsible for the synthesis of proteins in the cell. In Ictalurus punctatus (Channel catfish), this protein is Small ribosomal subunit protein eS8 (rps8).